The following is a 128-amino-acid chain: Small ribosomal subunit protein uS11 (128 aa).

The protein belongs to the universal ribosomal protein uS11 family. Part of the 30S ribosomal subunit. Interacts with proteins S7 and S18. Binds to IF-3.

In terms of biological role, located on the platform of the 30S subunit, it bridges several disparate RNA helices of the 16S rRNA. Forms part of the Shine-Dalgarno cleft in the 70S ribosome. This chain is Small ribosomal subunit protein uS11, found in Wolbachia sp. subsp. Drosophila simulans (strain wRi).